Here is a 163-residue protein sequence, read N- to C-terminus: Arginine repressor (163 aa).

It belongs to the ArgR family.

It is found in the cytoplasm. The protein operates within amino-acid biosynthesis; L-arginine biosynthesis [regulation]. Regulates arginine biosynthesis genes. This chain is Arginine repressor, found in Anaeromyxobacter dehalogenans (strain 2CP-C).